The primary structure comprises 205 residues: ATP-dependent Clp protease proteolytic subunit (205 aa).

The active-site Nucleophile is the Ser98. The active site involves His123.

Belongs to the peptidase S14 family. Fourteen ClpP subunits assemble into 2 heptameric rings which stack back to back to give a disk-like structure with a central cavity, resembling the structure of eukaryotic proteasomes.

Its subcellular location is the cytoplasm. It catalyses the reaction Hydrolysis of proteins to small peptides in the presence of ATP and magnesium. alpha-casein is the usual test substrate. In the absence of ATP, only oligopeptides shorter than five residues are hydrolyzed (such as succinyl-Leu-Tyr-|-NHMec, and Leu-Tyr-Leu-|-Tyr-Trp, in which cleavage of the -Tyr-|-Leu- and -Tyr-|-Trp bonds also occurs).. Its function is as follows. Cleaves peptides in various proteins in a process that requires ATP hydrolysis. Has a chymotrypsin-like activity. Plays a major role in the degradation of misfolded proteins. The sequence is that of ATP-dependent Clp protease proteolytic subunit from Desulforapulum autotrophicum (strain ATCC 43914 / DSM 3382 / VKM B-1955 / HRM2) (Desulfobacterium autotrophicum).